Here is an 874-residue protein sequence, read N- to C-terminus: MYQTTAELRSAFLEFFRSNGHQVVDSSSLVPGNDPTLLFTNAGMNQFKDVFLGMDKRNYTRATTAQRCVRAGGKHNDLDNVGYTARHHTFFEMLGNFSFGDYFKEEAIRFGWTFLTETLKLPKERLCVTIYQTDDEAFEIWNKKIGVAAENIIRIGDNKGAAYASDNFWQMGDTGPCGPCSEIFYDHGDHIWGGRPGSPEEDGDRFIEIWNIVFMQYNRQASGEMLPLPKPSVDTGMGIERIAAIMQGVHSNYEIDIFRTLIAKAAEIIGVSDLTEKSLRVIADHIRSCAFLIADGVMPSNEGRGYVLRRIIRRAVRHGNKLGATEAFFYKLVPSLIAVMGDAAKGLAETQAIVEKALKAEEEQFARTLERGLGILDTALNELKGTTLDGETVFKLYDTYGFPMDLTADVCRERNIIVDEAGFEVAMAEQRSRAQAAGNFGADYNAALKIDAETAFSGYTELAGQAKITAIYQNGESVTAIKAGDEAVVVLDVTPFYAESGGQVGDKGQLVASGVEFTVNDTQKYGQATGHQGVLATGNLSVGQVVEAKVDKKLRHRTQLNHSVTHLLHAALRQVLGTHVSQKGSLVDPERLRFDFSHFEGVKAAELKEVEELVNTQIRRNHELKTAEMGIDEAKEKGAMALFGEKYDSQVRVVTMGDFSIELCGGTHVGRTGDIGLFKITSEAGIAAGVRRIEAVTGAAAMAYVAQQQAELEEAAALLKGDANSVVAKLKAQLDKMKQLEKEMAQLKDKLAAAASADLVGDAVVVNGVNVLIKKLDGVEASSLRGLQDELKQKLKSAIIVLGTAQEGKVNLIAGVSNDLIGKVKAGELVAMVAAQVGGKGGGRPDMAQAGGSQPENLDAALAQVLPWITERLA.

The Zn(2+) site is built by H562, H566, C664, and H668.

Belongs to the class-II aminoacyl-tRNA synthetase family. The cofactor is Zn(2+).

It is found in the cytoplasm. It carries out the reaction tRNA(Ala) + L-alanine + ATP = L-alanyl-tRNA(Ala) + AMP + diphosphate. Catalyzes the attachment of alanine to tRNA(Ala) in a two-step reaction: alanine is first activated by ATP to form Ala-AMP and then transferred to the acceptor end of tRNA(Ala). Also edits incorrectly charged Ser-tRNA(Ala) and Gly-tRNA(Ala) via its editing domain. The chain is Alanine--tRNA ligase from Shewanella baltica (strain OS155 / ATCC BAA-1091).